The sequence spans 999 residues: Protein Smaug (999 aa).

Residues 1–37 (MKYATGTDNAMTSGISGQTNNSNSVSNEMQPTTSTPT) are compositionally biased toward polar residues. Disordered stretches follow at residues 1–45 (MKYA…EATS), 50–69 (TATY…QSQP), and 321–370 (CSSV…GSSS). Positions 321–338 (CSSVASSSMCPASGSRSS) are enriched in low complexity. Serine 564 and serine 575 each carry phosphoserine. The segment at 583–763 (EFKPNYIKFH…KDLKFKLSKM (181 aa)) is interaction with cup. Positions 600–654 (GIGLWLKSLRLHKYIELFKNMTYEEMLLITEDFLQSVGVTKGASHKLALCIDKLK) constitute an SAM domain. Positions 773 to 892 (HVKPAGVGPN…HHHAQQMQQM (120 aa)) are disordered. Polar residues-rich tracts occupy residues 801–822 (KNGS…NFSL) and 854–864 (HQPQYKSSSYP). Residue serine 972 is modified to Phosphoserine.

The protein belongs to the SMAUG family. Interacts with oskar (osk). Binds to the 3'-UTR of nos. Interacts with cup, which in turn recruits eIF4-E, leading to an indirect interaction between smg and eIF4-E that prevents mRNA translation.

The protein localises to the cytoplasm. Functionally, translation regulator that binds to the 3'-UTR of specific mRNAs such as nanos (nos) and prevent their translation. Prevents translation of unlocalized nos in the bulk cytoplasm via the recruitment of cup. The sequence is that of Protein Smaug (smg) from Drosophila yakuba (Fruit fly).